The chain runs to 519 residues: Pleckstrin homology domain-containing family A member 8 (519 aa).

In terms of domain architecture, PH spans methionine 1–alanine 93. Threonine 139 is modified (phosphothreonine). The residue at position 145 (serine 145) is a Phosphoserine. Phosphothreonine is present on threonine 153. The interval glycine 275–glutamate 302 is disordered. The segment at isoleucine 330–lysine 473 is glycolipid transfer protein homology domain.

Homodimer. Interacts with ARF1; the interaction together with phosphatidylinositol 4-phosphate binding is required for FAPP2 GlcCer transfer ability.

It localises to the golgi apparatus. The protein resides in the trans-Golgi network membrane. The protein localises to the membrane. Functionally, cargo transport protein that is required for apical transport from the trans-Golgi network (TGN). Transports AQP2 from the trans-Golgi network (TGN) to sites of AQP2 phosphorylation. Mediates the non-vesicular transport of glucosylceramide (GlcCer) from the trans-Golgi network (TGN) to the plasma membrane and plays a pivotal role in the synthesis of complex glycosphingolipids. Binding of both phosphatidylinositol 4-phosphate (PIP) and ARF1 are essential for the GlcCer transfer ability. Also required for primary cilium formation, possibly by being involved in the transport of raft lipids to the apical membrane, and for membrane tubulation. In Mus musculus (Mouse), this protein is Pleckstrin homology domain-containing family A member 8 (Plekha8).